The sequence spans 113 residues: Putative pterin-4-alpha-carbinolamine dehydratase (113 aa).

The protein belongs to the pterin-4-alpha-carbinolamine dehydratase family.

It carries out the reaction (4aS,6R)-4a-hydroxy-L-erythro-5,6,7,8-tetrahydrobiopterin = (6R)-L-erythro-6,7-dihydrobiopterin + H2O. The sequence is that of Putative pterin-4-alpha-carbinolamine dehydratase from Legionella pneumophila (strain Lens).